The chain runs to 85 residues: uncharacterized protein (85 aa).

Disordered regions lie at residues 1-28 (MPQKPLKVTKKAKDPRRVTKKQKNLRKA) and 35-54 (SKKKSLQHLKKLKKSSSLTE). Basic residues predominate over residues 35 to 48 (SKKKSLQHLKKLKK).

The protein resides in the nucleus. This is an uncharacterized protein from Saccharomyces cerevisiae (strain ATCC 204508 / S288c) (Baker's yeast).